The chain runs to 215 residues: Flavin-dependent thymidylate synthase (215 aa).

A ThyX domain is found at 1-215; that stretch reads MDVRFISLTK…FPTVAAALEW (215 aa). FAD contacts are provided by residues Ser-56, 79–81, and Glu-87; that span reads RHR. DUMP is bound by residues 76–79, 87–91, and Arg-155; these read QILR and EFSLR. A ThyX motif motif is present at residues 79–89; it reads RHRSFSFQEFS. His-177 contacts FAD. Arg-182 contributes to the dUMP binding site. The Involved in ionization of N3 of dUMP, leading to its activation role is filled by Arg-182.

This sequence belongs to the thymidylate synthase ThyX family. In terms of assembly, homotetramer. It depends on FAD as a cofactor.

The catalysed reaction is dUMP + (6R)-5,10-methylene-5,6,7,8-tetrahydrofolate + NADPH + H(+) = dTMP + (6S)-5,6,7,8-tetrahydrofolate + NADP(+). Its pathway is pyrimidine metabolism; dTTP biosynthesis. Functionally, catalyzes the reductive methylation of 2'-deoxyuridine-5'-monophosphate (dUMP) to 2'-deoxythymidine-5'-monophosphate (dTMP) while utilizing 5,10-methylenetetrahydrofolate (mTHF) as the methyl donor, and NADPH and FADH(2) as the reductant. This Synechocystis sp. (strain ATCC 27184 / PCC 6803 / Kazusa) protein is Flavin-dependent thymidylate synthase.